Consider the following 383-residue polypeptide: Processive diacylglycerol beta-glucosyltransferase (383 aa).

This sequence belongs to the glycosyltransferase 28 family. UgtP subfamily.

The protein localises to the cell membrane. The catalysed reaction is a 1,2-diacyl-3-O-(beta-D-glucopyranosyl)-sn-glycerol + UDP-alpha-D-glucose = a 1,2-diacyl-3-O-(beta-D-Glc-(1-&gt;6)-beta-D-Glc)-sn-glycerol + UDP + H(+). It carries out the reaction a 1,2-diacyl-3-O-(beta-D-Glc-(1-&gt;6)-beta-D-Glc)-sn-glycerol + UDP-alpha-D-glucose = a 1,2-diacyl-3-O-(beta-D-Glc-(1-&gt;6)-beta-D-Glc-(1-&gt;6)-beta-D-Glc)-sn-glycerol + UDP + H(+). The enzyme catalyses a 1,2-diacyl-sn-glycerol + UDP-alpha-D-glucose = a 1,2-diacyl-3-O-(beta-D-glucopyranosyl)-sn-glycerol + UDP + H(+). The protein operates within glycolipid metabolism; diglucosyl-diacylglycerol biosynthesis. In terms of biological role, processive glucosyltransferase involved in the biosynthesis of both the bilayer- and non-bilayer-forming membrane glucolipids. Is able to successively transfer up to three glucosyl residues to diacylglycerol (DAG), thereby catalyzing the formation of beta-monoglucosyl-DAG (3-O-(beta-D-glucopyranosyl)-1,2-diacyl-sn-glycerol), beta-diglucosyl-DAG (3-O-(beta-D-glucopyranosyl-beta-(1-&gt;6)-D-glucopyranosyl)-1,2-diacyl-sn-glycerol) and beta-triglucosyl-DAG (3-O-(beta-D-glucopyranosyl-beta-(1-&gt;6)-D-glucopyranosyl-beta-(1-&gt;6)-D-glucopyranosyl)-1,2-diacyl-sn-glycerol). Beta-diglucosyl-DAG is the predominant glycolipid found in Bacillales and is also used as a membrane anchor for lipoteichoic acid (LTA). This chain is Processive diacylglycerol beta-glucosyltransferase, found in Bacillus pumilus (strain SAFR-032).